Here is a 65-residue protein sequence, read N- to C-terminus: MVAKQRIRMANEKHSKNITQRGNVAKTLRPQEEKYPVGPWLLALFVFVVCGSAIFQIIQSIRMGM.

A helical membrane pass occupies residues 38–58 (GPWLLALFVFVVCGSAIFQII).

Belongs to the RAMP4 family. As to quaternary structure, interacts with SEC61B, SEC61A1 and the SEC61 complex. Interacts with CANX.

The protein resides in the membrane. Its subcellular location is the endoplasmic reticulum membrane. In terms of biological role, interacts with target proteins during their translocation into the lumen of the endoplasmic reticulum. Protects unfolded target proteins against degradation during ER stress. May facilitate glycosylation of target proteins after termination of ER stress. May modulate the use of N-glycosylation sites on target proteins. In Bos taurus (Bovine), this protein is Stress-associated endoplasmic reticulum protein 2 (SERP2).